A 274-amino-acid polypeptide reads, in one-letter code: Carbonic anhydrase (274 aa).

Zn(2+) is bound by residues C39, H98, and C101. Positions 214-274 (EDEYAPHPNS…QAERIYRGSR (61 aa)) are disordered. 2 stretches are compositionally biased toward basic and acidic residues: residues 234-245 (PGKERPGREKAT) and 261-274 (LPRE…RGSR).

Belongs to the beta-class carbonic anhydrase family. A hexamer formed by a trimer of dimers. Interacts with the first 260 residues of CcmM; both the N-terminal 206 residues and the C-terminal tail contribute to CcmM binding. Interacts with full-length and the N-terminal 249 residues of CcmM. A probable CcmM-CcaA-CcmN complex as well as a CcaA-RuBisCO-CcmM complex can also be isolated. It depends on Zn(2+) as a cofactor.

The protein localises to the carboxysome. The enzyme catalyses hydrogencarbonate + H(+) = CO2 + H2O. With respect to regulation, inhibited by ethoxyzolamide. In terms of biological role, reversible hydration of carbon dioxide. Essential to photosynthetic carbon dioxide fixation, supplies CO(2) to RuBisCO (ribulose bisphosphate carboxylase, rbcL-rbcS) in the carboxysome. This Synechocystis sp. (strain ATCC 27184 / PCC 6803 / Kazusa) protein is Carbonic anhydrase.